The following is a 330-amino-acid chain: MSSRKKKDAEVAQASVEVNPDLDVEELEGVGRVTGAKLKERGFFTVRDVAFASVKELAEVVGNEERALQIVEAARKMLGLHSFVSALEVYERRKTIRRISTGVKALDELLGGGIETRAVTEVAGEFGSGKTQLCHQLAVMVQLPEERGGLGAKAIYIDTENTFRPERIMQIAKARGLDPDQALNNIFYARAYSSDHQMILVDQAKSIIKQNNVALLVVDSVIAHFRSEFPGRENLAERQQKLNKHVADLLRLADAYDVAVVITNQVMAQPDVFFGNPLRPAGGNILAHGATYRLWLRKSKENIRIAKIFDSPYHPEGEVSFRITEEGLVD.

Position 124–131 (124–131 (GEFGSGKT)) interacts with ATP.

The protein belongs to the eukaryotic RecA-like protein family.

Its function is as follows. Involved in DNA repair and in homologous recombination. Binds and assemble on single-stranded DNA to form a nucleoprotein filament. Hydrolyzes ATP in a ssDNA-dependent manner and promotes DNA strand exchange between homologous DNA molecules. The protein is DNA repair and recombination protein RadA of Pyrobaculum neutrophilum (strain DSM 2338 / JCM 9278 / NBRC 100436 / V24Sta) (Thermoproteus neutrophilus).